Consider the following 546-residue polypeptide: Chaperonin GroEL (546 aa).

ATP is bound by residues 30–33 (TLGP), lysine 51, 87–91 (DGTTT), glycine 415, and aspartate 497. The segment at 527-546 (PKKDSPAPAMPGGGMGGMDF) is disordered. Residues 537–546 (PGGGMGGMDF) are compositionally biased toward gly residues.

The protein belongs to the chaperonin (HSP60) family. Forms a cylinder of 14 subunits composed of two heptameric rings stacked back-to-back. Interacts with the co-chaperonin GroES.

Its subcellular location is the cytoplasm. The enzyme catalyses ATP + H2O + a folded polypeptide = ADP + phosphate + an unfolded polypeptide.. Functionally, together with its co-chaperonin GroES, plays an essential role in assisting protein folding. The GroEL-GroES system forms a nano-cage that allows encapsulation of the non-native substrate proteins and provides a physical environment optimized to promote and accelerate protein folding. The chain is Chaperonin GroEL from Methylorubrum populi (strain ATCC BAA-705 / NCIMB 13946 / BJ001) (Methylobacterium populi).